A 400-amino-acid polypeptide reads, in one-letter code: Phosphoglycerate kinase (400 aa).

Residues 21–23 (DFN), R36, 59–62 (HLGR), R119, and R160 contribute to the substrate site. Residues K211, E329, and 356–359 (GGDS) contribute to the ATP site.

It belongs to the phosphoglycerate kinase family. Monomer.

It is found in the cytoplasm. The enzyme catalyses (2R)-3-phosphoglycerate + ATP = (2R)-3-phospho-glyceroyl phosphate + ADP. It participates in carbohydrate degradation; glycolysis; pyruvate from D-glyceraldehyde 3-phosphate: step 2/5. The chain is Phosphoglycerate kinase from Lactiplantibacillus plantarum (strain ATCC BAA-793 / NCIMB 8826 / WCFS1) (Lactobacillus plantarum).